Here is a 208-residue protein sequence, read N- to C-terminus: Large ribosomal subunit protein uL4 (208 aa).

A disordered region spans residues 45-95 (RQGTHKAKTRSEVRGGGKKPFRQKGTGNARQGSSRSPIHVGGGTIFGPQPH). Polar residues predominate over residues 69-80 (GTGNARQGSSRS).

It belongs to the universal ribosomal protein uL4 family. Part of the 50S ribosomal subunit.

Its function is as follows. One of the primary rRNA binding proteins, this protein initially binds near the 5'-end of the 23S rRNA. It is important during the early stages of 50S assembly. It makes multiple contacts with different domains of the 23S rRNA in the assembled 50S subunit and ribosome. Forms part of the polypeptide exit tunnel. The sequence is that of Large ribosomal subunit protein uL4 from Chlorobium chlorochromatii (strain CaD3).